Reading from the N-terminus, the 560-residue chain is Potassium-transporting ATPase potassium-binding subunit (560 aa).

A run of 12 helical transmembrane segments spans residues 11 to 31, 63 to 83, 134 to 154, 179 to 199, 254 to 274, 282 to 302, 329 to 349, 356 to 376, 379 to 399, 417 to 437, 488 to 508, and 530 to 550; these read IFLL…VAFF, SYCT…YGLL, FVTM…TALI, LLPL…PQTF, VIEM…YGHA, WVLF…VYNA, FGIP…TGSV, LTPI…VFGG, VGFV…GLMV, LIVI…AIAL, VVML…AGSL, and VILF…VLIL.

The protein belongs to the KdpA family. As to quaternary structure, the system is composed of three essential subunits: KdpA, KdpB and KdpC.

The protein localises to the cell membrane. Functionally, part of the high-affinity ATP-driven potassium transport (or Kdp) system, which catalyzes the hydrolysis of ATP coupled with the electrogenic transport of potassium into the cytoplasm. This subunit binds the extracellular potassium ions and delivers the ions to the membrane domain of KdpB through an intramembrane tunnel. The sequence is that of Potassium-transporting ATPase potassium-binding subunit from Geobacillus kaustophilus (strain HTA426).